The following is a 335-amino-acid chain: Beta-ketoacyl-[acyl-carrier-protein] synthase III (335 aa).

Active-site residues include cysteine 117 and histidine 258. The tract at residues 259–263 is ACP-binding; that stretch reads QANQR. The active site involves asparagine 288.

The protein belongs to the thiolase-like superfamily. FabH family. Homodimer.

The protein resides in the cytoplasm. It carries out the reaction malonyl-[ACP] + acetyl-CoA + H(+) = 3-oxobutanoyl-[ACP] + CO2 + CoA. The protein operates within lipid metabolism; fatty acid biosynthesis. Its function is as follows. Catalyzes the condensation reaction of fatty acid synthesis by the addition to an acyl acceptor of two carbons from malonyl-ACP. Catalyzes the first condensation reaction which initiates fatty acid synthesis and may therefore play a role in governing the total rate of fatty acid production. Possesses both acetoacetyl-ACP synthase and acetyl transacylase activities. Its substrate specificity determines the biosynthesis of branched-chain and/or straight-chain of fatty acids. The sequence is that of Beta-ketoacyl-[acyl-carrier-protein] synthase III from Synechococcus elongatus (strain ATCC 33912 / PCC 7942 / FACHB-805) (Anacystis nidulans R2).